The chain runs to 101 residues: MDKSKQPFHKTKRSFRRRLPPIGSGDRIDYRNMSLISRFISEQGKILSRRVNRLTLKQQRLITIAIKQARILSLLPFLNNEKQFERTESIPRATGPRTRNK.

Over residues 1 to 19 (MDKSKQPFHKTKRSFRRRL) the composition is skewed to basic residues. The tract at residues 1–23 (MDKSKQPFHKTKRSFRRRLPPIG) is disordered.

This sequence belongs to the bacterial ribosomal protein bS18 family. As to quaternary structure, part of the 30S ribosomal subunit.

The protein resides in the plastid. It is found in the chloroplast. The sequence is that of Small ribosomal subunit protein bS18c from Lemna minor (Common duckweed).